A 101-amino-acid polypeptide reads, in one-letter code: Protein S100-A7A (101 aa).

EF-hand domains follow at residues 13–48 (MIDMFHKYTGRDGKIEKPSLLTMMKENFPNFLSACD) and 50–85 (KGIHYLATVFEKKDKNEDKKIDFSEFLSLLGDIAAD). Zn(2+) is bound by residues histidine 18, glutamate 28, and glutamate 38. Positions 63 and 65 each coordinate Ca(2+). Glutamate 66 is a Zn(2+) binding site. Ca(2+)-binding residues include aspartate 67, lysine 69, and glutamate 74. Residues histidine 87 and histidine 91 each contribute to the Zn(2+) site.

Belongs to the S-100 family. In terms of tissue distribution, overexpressed in psoriasis.

The protein localises to the cytoplasm. Functionally, may be involved in epidermal differentiation and inflammation and might therefore be important for the pathogenesis of psoriasis and other diseases. This Homo sapiens (Human) protein is Protein S100-A7A (S100A7A).